The primary structure comprises 1275 residues: Probable Rho-type GTPase-activating protein 2 (1275 aa).

Disordered stretches follow at residues 118–146 (KYESTDSFPSSQPSRANSPQSDSYSSPYE), 213–238 (NTKRSHRSSEEPGASSPVTSPILKDS), 280–306 (SSFRRPITKPTPFNSDSNISIDPKDNN), and 335–365 (SSPRRKSISIVKPHGISSPKHSTNNLSSKSG). Over residues 122–143 (TDSFPSSQPSRANSPQSDSYSS) the composition is skewed to polar residues. Composition is skewed to polar residues over residues 290–299 (TPFNSDSNIS) and 353–364 (PKHSTNNLSSKS). Position 388 is a phosphoserine (Ser-388). Disordered regions lie at residues 390-466 (IIEN…RSSF) and 539-561 (FSKSKSHNHHPSSQVEKSTSNSK). Composition is skewed to polar residues over residues 450-466 (SLSLQKTGSSDTRRSSF) and 552-561 (QVEKSTSNSK). The PH domain occupies 719–836 (HAQKEGVLLK…WLRAILRQVP (118 aa)). The span at 957–971 (ADTRRNQDAPEKHVP) shows a compositional bias: basic and acidic residues. 2 disordered regions span residues 957–988 (ADTRRNQDAPEKHVPVIEIQSSRPSLEKTDQS) and 1254–1275 (NGAQNESDSDVSDDNGEDNEFF). One can recognise a Rho-GAP domain in the interval 1065-1275 (LPLNEAVNIS…DDNGEDNEFF (211 aa)). Residues 1260–1275 (SDSDVSDDNGEDNEFF) show a composition bias toward acidic residues.

Its subcellular location is the nucleus. Functionally, GTPase-activating protein for Rho-type proteins. In Schizosaccharomyces pombe (strain 972 / ATCC 24843) (Fission yeast), this protein is Probable Rho-type GTPase-activating protein 2 (rga2).